A 364-amino-acid polypeptide reads, in one-letter code: Alanine racemase (364 aa).

K34 serves as the catalytic Proton acceptor; specific for D-alanine. At K34 the chain carries N6-(pyridoxal phosphate)lysine. R129 provides a ligand contact to substrate. Residue Y259 is the Proton acceptor; specific for L-alanine of the active site. M307 is a substrate binding site.

It belongs to the alanine racemase family. It depends on pyridoxal 5'-phosphate as a cofactor.

It carries out the reaction L-alanine = D-alanine. It functions in the pathway amino-acid biosynthesis; D-alanine biosynthesis; D-alanine from L-alanine: step 1/1. Catalyzes the interconversion of L-alanine and D-alanine. May also act on other amino acids. The polypeptide is Alanine racemase (alr) (Coxiella burnetii (strain RSA 493 / Nine Mile phase I)).